The primary structure comprises 176 residues: Large ribosomal subunit protein uL6 (176 aa).

This sequence belongs to the universal ribosomal protein uL6 family. In terms of assembly, part of the 50S ribosomal subunit.

Functionally, this protein binds to the 23S rRNA, and is important in its secondary structure. It is located near the subunit interface in the base of the L7/L12 stalk, and near the tRNA binding site of the peptidyltransferase center. This is Large ribosomal subunit protein uL6 from Thiobacillus denitrificans (strain ATCC 25259 / T1).